Consider the following 389-residue polypeptide: Urotensin-2 receptor (389 aa).

A compositionally biased stretch (polar residues) spans M1–S10. The interval M1 to P39 is disordered. Residues M1–I54 are Extracellular-facing. Residues N29 and N33 are each glycosylated (N-linked (GlcNAc...) asparagine). Residues A30 to P39 are compositionally biased toward polar residues. The helical transmembrane segment at G55 to C77 threads the bilayer. The Cytoplasmic segment spans residues R78–Y87. Residues V88–T113 traverse the membrane as a helical segment. The Extracellular segment spans residues K114–R124. An intrachain disulfide couples C123 to C199. Residues V125–S146 form a helical membrane-spanning segment. At E147–K167 the chain is on the cytoplasmic side. A helical membrane pass occupies residues L168–L186. Topologically, residues A187–R209 are extracellular. A helical transmembrane segment spans residues A210–A232. At R233–R258 the chain is on the cytoplasmic side. A helical transmembrane segment spans residues L259–H284. Topologically, residues Q285–N297 are extracellular. A helical transmembrane segment spans residues Y298–L318. Over T319–A389 the chain is Cytoplasmic. Positions G328 to A389 are disordered. A compositionally biased stretch (gly residues) spans R331–G340. Polar residues predominate over residues S355 to D368. Pro residues predominate over residues P377–A389.

This sequence belongs to the G-protein coupled receptor 1 family. As to expression, most abundant expression in the heart and pancreas.

The protein resides in the cell membrane. High affinity receptor for urotensin-2 and urotensin-2B. The activity of this receptor is mediated by a G-protein that activate a phosphatidylinositol-calcium second messenger system. This is Urotensin-2 receptor (UTS2R) from Homo sapiens (Human).